Consider the following 378-residue polypeptide: MSVSGLKAELKFLASIFDKNHERFRIVSWKLDELHCQFLVPPPPPPPGSSLSPPPPLTLHCNITESYPSSSPIWFVDSDDPNLTSVLERLEDTKNNSSLRQQLKWLICDLCRLYNLPKHLDVEMLDQPLPTGQNGTTEEVTSEEEEEEEMAEDIEDLDHYEMKEEEPINGKKSEDEGIEKENLAILEKIRKTQRQDHLNGAVSGSVQASDRLMKELRDVYRSQSYKAGIYSVELINDSLYDWHVKLHKVDSDSPLHSDLQILKEKEGIEYILLNFSFKDNFPFDPPFVRVVLPVLSGGYVLGGGALCMELLTKQGWSSAYSIESVIMQINATLVKGKARVQFGANKNQYNLARAQQSYNSIVQIHEKNGWYTPPKEDG.

Positions 126–152 are disordered; that stretch reads DQPLPTGQNGTTEEVTSEEEEEEEMAE. Residues 140-152 show a composition bias toward acidic residues; it reads VTSEEEEEEEMAE. Residues 207-371 form the UBC core domain; that stretch reads QASDRLMKEL…VQIHEKNGWY (165 aa). Cysteine 307 acts as the Glycyl thioester intermediate in catalysis.

It belongs to the ubiquitin-conjugating enzyme family. In terms of processing, auto-ubiquitinated in vitro.

It localises to the cytoplasm. It catalyses the reaction S-ubiquitinyl-[E1 ubiquitin-activating enzyme]-L-cysteine + [E2 ubiquitin-conjugating enzyme]-L-cysteine = [E1 ubiquitin-activating enzyme]-L-cysteine + S-ubiquitinyl-[E2 ubiquitin-conjugating enzyme]-L-cysteine.. It participates in protein modification; protein ubiquitination. Functionally, accepts ubiquitin from the E1 complex and catalyzes its covalent attachment to other proteins. In vitro catalyzes 'Lys-48'-linked polyubiquitination. This Mus musculus (Mouse) protein is Ubiquitin-conjugating enzyme E2 Q2 (Ube2q2).